Consider the following 250-residue polypeptide: MTAVRDPFFPADQSIRASHNPIEVRELGMMDYQRAWDLQAELNKQRQHDEINDVILVLEHPSIYTAGKRTQPSDRPQNGLPVIDVDRGGRITWHGPGQLVMYPIIKLAEPIDVVDYVRRVEEALIHVIRTHGIPNAGRIDGRSGVWVPGKTPEEHRKVAALGIRIAGGVTMHGLALNCDNTVEFYDYIVPCGISDAGVTTMSQEVGNDVTTQSMTAPLLAALDDAFAGRLVVADHSFASAPDPTKIPRRP.

One can recognise a BPL/LPL catalytic domain in the interval 49-230; that stretch reads DEINDVILVL…ALDDAFAGRL (182 aa). Substrate contacts are provided by residues 87–94, 160–162, and 173–175; these read RGGRITWH, ALG, and GLA. The active-site Acyl-thioester intermediate is the Cys-191.

This sequence belongs to the LipB family.

The protein localises to the cytoplasm. The catalysed reaction is octanoyl-[ACP] + L-lysyl-[protein] = N(6)-octanoyl-L-lysyl-[protein] + holo-[ACP] + H(+). The protein operates within protein modification; protein lipoylation via endogenous pathway; protein N(6)-(lipoyl)lysine from octanoyl-[acyl-carrier-protein]: step 1/2. In terms of biological role, catalyzes the transfer of endogenously produced octanoic acid from octanoyl-acyl-carrier-protein onto the lipoyl domains of lipoate-dependent enzymes. Lipoyl-ACP can also act as a substrate although octanoyl-ACP is likely to be the physiological substrate. This Corynebacterium diphtheriae (strain ATCC 700971 / NCTC 13129 / Biotype gravis) protein is Octanoyltransferase.